The sequence spans 530 residues: MSQLDTTTPSGDYLMALDAGTGSVRAVIFDLNGNQIAAGQAEWLHLPVPDVPGSMEFDLTTNWQLMCQCIRQALHLAKLPASAIRAVAACSMREGIVLYDRSGTPIWACANVDARASREVSELKELHNNGFELEVYQCSGQTLALSAMPRLLWLAHYRPDIYRQAGTLTMISDWLANMLSGELAVDPSNAGTTGMLDLVTRNWQPNLLEMAGLRADILSPVKETGTLLGHVTAKAAQECGLLAGTPVVMGGGDVQLGCLGLGVVHAGQTAVLGGTFWQQVVNLPQPIIDPNMNTRINPHVIPGMVQAESISFFTGLTMRWFRDAFCAEEKLLAQRLGIDTYSLLEDMAARVPAGAYGVMPIFSDVMRFKSWYHAAPSFINLSLDPEKCNKATLFRALEENAAIVSACNLAQIAEFSGVKASSVVFAGGGAKGKLWSQILADVTGVPVKVPVVKEATALGCAIAAGVGVGLYEALDKTGERLVRWEREYIPNTEHKALYQAAKTNWQAVYTDQLGLVDCGLTTSLWKAPGL.

This sequence belongs to the FGGY kinase family.

Its subcellular location is the cytoplasm. The catalysed reaction is (S)-4,5-dihydroxypentane-2,3-dione + ATP = (2S)-2-hydroxy-3,4-dioxopentyl phosphate + ADP + H(+). Functionally, catalyzes the phosphorylation of autoinducer-2 (AI-2) to phospho-AI-2, which subsequently inactivates the transcriptional regulator LsrR and leads to the transcription of the lsr operon. Phosphorylates the ring-open form of (S)-4,5-dihydroxypentane-2,3-dione (DPD), which is the precursor to all AI-2 signaling molecules, at the C5 position. The chain is Autoinducer-2 kinase from Yersinia pseudotuberculosis serotype O:3 (strain YPIII).